Consider the following 122-residue polypeptide: Small ribosomal subunit protein bS16 (122 aa).

Positions 87 to 122 (AQSNPKKALPKKKAQERAAASAAAAEKAAAAAAPEA) are disordered. Over residues 103-122 (RAAASAAAAEKAAAAAAPEA) the composition is skewed to low complexity.

The protein belongs to the bacterial ribosomal protein bS16 family.

In Methylocella silvestris (strain DSM 15510 / CIP 108128 / LMG 27833 / NCIMB 13906 / BL2), this protein is Small ribosomal subunit protein bS16.